We begin with the raw amino-acid sequence, 349 residues long: Phosphoribosylformylglycinamidine cyclo-ligase (349 aa).

The protein belongs to the AIR synthase family.

The protein localises to the cytoplasm. The catalysed reaction is 2-formamido-N(1)-(5-O-phospho-beta-D-ribosyl)acetamidine + ATP = 5-amino-1-(5-phospho-beta-D-ribosyl)imidazole + ADP + phosphate + H(+). Its pathway is purine metabolism; IMP biosynthesis via de novo pathway; 5-amino-1-(5-phospho-D-ribosyl)imidazole from N(2)-formyl-N(1)-(5-phospho-D-ribosyl)glycinamide: step 2/2. This Lactobacillus helveticus (strain DPC 4571) protein is Phosphoribosylformylglycinamidine cyclo-ligase.